Consider the following 51-residue polypeptide: Putative inactivation escape 1 protein (51 aa).

Highly expressed in pancreas, heart and liver followed by brain, placenta, lung, skeletal muscle and kidney. Mostly expressed in females.

This Homo sapiens (Human) protein is Putative inactivation escape 1 protein (INE1).